A 384-amino-acid polypeptide reads, in one-letter code: Galactokinase (384 aa).

Position 34–37 (34–37 (EHTD)) interacts with substrate. 123–129 (SSGLSSS) lines the ATP pocket. 2 residues coordinate Mg(2+): S129 and E161. The active-site Proton acceptor is D173. Substrate is bound at residue Y222.

Belongs to the GHMP kinase family. GalK subfamily.

Its subcellular location is the cytoplasm. The catalysed reaction is alpha-D-galactose + ATP = alpha-D-galactose 1-phosphate + ADP + H(+). Its pathway is carbohydrate metabolism; galactose metabolism. Catalyzes the transfer of the gamma-phosphate of ATP to D-galactose to form alpha-D-galactose-1-phosphate (Gal-1-P). The polypeptide is Galactokinase (Haemophilus influenzae (strain PittGG)).